Reading from the N-terminus, the 443-residue chain is BBSome complex member BBS5 homolog (443 aa).

The protein belongs to the BBS5 family.

It is found in the cytoplasm. The protein localises to the cytoskeleton. It localises to the flagellum axoneme. The chain is BBSome complex member BBS5 homolog from Giardia intestinalis (strain ATCC 50803 / WB clone C6) (Giardia lamblia).